The following is a 272-amino-acid chain: 4-hydroxy-tetrahydrodipicolinate reductase (272 aa).

NAD(+) contacts are provided by residues 10-15 (GAGGRM), Glu36, 100-102 (GTT), and 124-127 (SGNM). His157 functions as the Proton donor/acceptor in the catalytic mechanism. His158 is a binding site for (S)-2,3,4,5-tetrahydrodipicolinate. Catalysis depends on Lys161, which acts as the Proton donor. 167-168 (GT) contacts (S)-2,3,4,5-tetrahydrodipicolinate.

This sequence belongs to the DapB family.

Its subcellular location is the cytoplasm. It carries out the reaction (S)-2,3,4,5-tetrahydrodipicolinate + NAD(+) + H2O = (2S,4S)-4-hydroxy-2,3,4,5-tetrahydrodipicolinate + NADH + H(+). The enzyme catalyses (S)-2,3,4,5-tetrahydrodipicolinate + NADP(+) + H2O = (2S,4S)-4-hydroxy-2,3,4,5-tetrahydrodipicolinate + NADPH + H(+). It functions in the pathway amino-acid biosynthesis; L-lysine biosynthesis via DAP pathway; (S)-tetrahydrodipicolinate from L-aspartate: step 4/4. Its function is as follows. Catalyzes the conversion of 4-hydroxy-tetrahydrodipicolinate (HTPA) to tetrahydrodipicolinate. This is 4-hydroxy-tetrahydrodipicolinate reductase from Bradyrhizobium sp. (strain ORS 278).